A 309-amino-acid chain; its full sequence is Carbamate kinase 2 (309 aa).

The protein belongs to the carbamate kinase family.

The protein localises to the cytoplasm. It carries out the reaction hydrogencarbonate + NH4(+) + ATP = carbamoyl phosphate + ADP + H2O + H(+). It functions in the pathway metabolic intermediate metabolism; carbamoyl phosphate degradation; CO(2) and NH(3) from carbamoyl phosphate: step 1/1. This is Carbamate kinase 2 (arcC2) from Staphylococcus epidermidis (strain ATCC 12228 / FDA PCI 1200).